The chain runs to 218 residues: 3-isopropylmalate dehydratase small subunit (218 aa).

This sequence belongs to the LeuD family. LeuD type 1 subfamily. As to quaternary structure, heterodimer of LeuC and LeuD.

The catalysed reaction is (2R,3S)-3-isopropylmalate = (2S)-2-isopropylmalate. The protein operates within amino-acid biosynthesis; L-leucine biosynthesis; L-leucine from 3-methyl-2-oxobutanoate: step 2/4. Functionally, catalyzes the isomerization between 2-isopropylmalate and 3-isopropylmalate, via the formation of 2-isopropylmaleate. This chain is 3-isopropylmalate dehydratase small subunit, found in Alkalilimnicola ehrlichii (strain ATCC BAA-1101 / DSM 17681 / MLHE-1).